A 103-amino-acid polypeptide reads, in one-letter code: Histone H4 (103 aa).

The segment covering 1 to 14 (MSGRGKGGKGLGKG) has biased composition (gly residues). The disordered stretch occupies residues 1-20 (MSGRGKGGKGLGKGGAKRHR). The DNA-binding element occupies 17–21 (KRHRK).

The protein belongs to the histone H4 family. In terms of assembly, the nucleosome is a histone octamer containing two molecules each of H2A, H2B, H3 and H4 assembled in one H3-H4 heterotetramer and two H2A-H2B heterodimers. The octamer wraps approximately 147 bp of DNA.

The protein resides in the nucleus. Its subcellular location is the chromosome. Core component of nucleosome. Nucleosomes wrap and compact DNA into chromatin, limiting DNA accessibility to the cellular machineries which require DNA as a template. Histones thereby play a central role in transcription regulation, DNA repair, DNA replication and chromosomal stability. DNA accessibility is regulated via a complex set of post-translational modifications of histones, also called histone code, and nucleosome remodeling. This Volvox carteri (Green alga) protein is Histone H4 (H4-I).